Here is a 342-residue protein sequence, read N- to C-terminus: N-alpha-acetyl-L-2,4-diaminobutyric acid deacetylase (342 aa).

The tract at residues 103-124 is disordered; that stretch reads TAGRRTSPMDGGNLNRSFPGDP.

Belongs to the DoeB deacetylase family. Zn(2+) serves as cofactor.

Its subcellular location is the cytoplasm. The catalysed reaction is (2S)-2-acetamido-4-aminobutanoate + H2O = L-2,4-diaminobutanoate + acetate. Its function is as follows. Involved in the degradation of ectoine, which allows H.elongata to utilize ectoine as both a carbon and a nitrogen source for growth. Catalyzes the deacetylation of N-alpha-acetyl-L-2,4-diaminobutyrate (N-alpha-Ac-DABA) to yield L-2,4-diaminobutyrate (DABA). The chain is N-alpha-acetyl-L-2,4-diaminobutyric acid deacetylase from Halomonas elongata (strain ATCC 33173 / DSM 2581 / NBRC 15536 / NCIMB 2198 / 1H9).